Reading from the N-terminus, the 251-residue chain is Probable transcriptional regulatory protein Cpar_0525 (251 aa).

This sequence belongs to the TACO1 family.

The protein resides in the cytoplasm. The protein is Probable transcriptional regulatory protein Cpar_0525 of Chlorobaculum parvum (strain DSM 263 / NCIMB 8327) (Chlorobium vibrioforme subsp. thiosulfatophilum).